We begin with the raw amino-acid sequence, 547 residues long: ATP synthase subunit alpha (547 aa).

173–180 (GDRATGKT) provides a ligand contact to ATP. Residues 526 to 547 (PEAEALADEDVEQEQIVRQKRG) form a disordered region. Over residues 528-538 (AEALADEDVEQ) the composition is skewed to acidic residues.

It belongs to the ATPase alpha/beta chains family. In terms of assembly, F-type ATPases have 2 components, CF(1) - the catalytic core - and CF(0) - the membrane proton channel. CF(1) has five subunits: alpha(3), beta(3), gamma(1), delta(1), epsilon(1). CF(0) has three main subunits: a(1), b(2) and c(9-12). The alpha and beta chains form an alternating ring which encloses part of the gamma chain. CF(1) is attached to CF(0) by a central stalk formed by the gamma and epsilon chains, while a peripheral stalk is formed by the delta and b chains.

It localises to the cell membrane. The catalysed reaction is ATP + H2O + 4 H(+)(in) = ADP + phosphate + 5 H(+)(out). Its function is as follows. Produces ATP from ADP in the presence of a proton gradient across the membrane. The alpha chain is a regulatory subunit. The chain is ATP synthase subunit alpha from Nocardioides sp. (strain ATCC BAA-499 / JS614).